A 202-amino-acid polypeptide reads, in one-letter code: Na(+)-translocating NADH-quinone reductase subunit E (202 aa).

A run of 6 helical transmembrane segments spans residues 11–31, 35–55, 81–101, 114–134, 144–164, and 180–200; these read SVFI…FLAM, INAA…TVPA, FLSF…MEMV, GVFL…LFMV, VVYG…LAGI, and LGIT…FGGI.

It belongs to the NqrDE/RnfAE family. Composed of six subunits; NqrA, NqrB, NqrC, NqrD, NqrE and NqrF.

It is found in the cell inner membrane. It carries out the reaction a ubiquinone + n Na(+)(in) + NADH + H(+) = a ubiquinol + n Na(+)(out) + NAD(+). NQR complex catalyzes the reduction of ubiquinone-1 to ubiquinol by two successive reactions, coupled with the transport of Na(+) ions from the cytoplasm to the periplasm. NqrA to NqrE are probably involved in the second step, the conversion of ubisemiquinone to ubiquinol. The sequence is that of Na(+)-translocating NADH-quinone reductase subunit E from Cellvibrio japonicus (strain Ueda107) (Pseudomonas fluorescens subsp. cellulosa).